A 387-amino-acid polypeptide reads, in one-letter code: EARP and GARP complex-interacting protein 1 (387 aa).

N-acetylmethionine is present on Met-1. 4 WD repeats span residues 132-172 (TAHS…SQAV), 180-222 (GGKG…QIYC), 226-266 (AHGQ…EPVK), and 270-310 (EHSH…SEPF). The segment at 310–334 (FGHLVDDDDISDQEDHRSEEKSKEP) is disordered. Residue Ser-320 is modified to Phosphoserine. The segment covering 322 to 334 (QEDHRSEEKSKEP) has biased composition (basic and acidic residues). The WD 5 repeat unit spans residues 345-385 (EHEDSVYAVDWSSADPWLFASLSYDGRLVINRVPRALKYHI).

It belongs to the WD repeat EIPR1 family. As to quaternary structure, interacts with two multisubunit tethering complexes: EARP composed of VPS50, VPS51, VPS52 and VPS53 subunits and GARP complex composed of VPS51, VPS52, VPS53 and VPS54 subunits. Interacts with SNAP29.

Its subcellular location is the golgi apparatus. It localises to the trans-Golgi network. Functionally, acts as a component of endosomal retrieval machinery that is involved in protein transport from early endosomes to either recycling endosomes or the trans-Golgi network. Mediates the recruitment of Golgi-associated retrograde protein (GARP) complex to the trans-Golgi network and controls early endosome-to-Golgi transport of internalized protein. Promotes the recycling of internalized transferrin receptor (TFRC) to the plasma membrane through interaction with endosome-associated recycling protein (EARP) complex. Controls proper insulin distribution and secretion, and retention of cargo in mature dense core vesicles. Required for the stability of the endosome-associated retrograde protein (EARP) complex subunits and for proper localization and association of EARP with membranes. This Macaca fascicularis (Crab-eating macaque) protein is EARP and GARP complex-interacting protein 1.